The chain runs to 1201 residues: MLDVNNFEYMKIGLASPDKIRSWSHGEVKKPETINYRTLKPERDGLFCERIFGPMKDWECSCGKYKRVRYKGVVCDRCGVEVTKSKVRRERMGHIELAAPVSHIWYFKGIPSRMGLVMDMSPRALEEIIYFASYVVTEPGDTPLEKKQLLSEREYRVYREKYGKGFSAGMGAEAIKKILSDIDLEKETNDLKEELKSAQGQRRTRAIRRLEVMEAFRNSGNNPSWMVLDVLPVIPPEIRPMVQLEGGRFATSDLNDLYRRVINRNNRLKRLLDLGAPNIIVQNEKRMLQEAVDALIDNGRRGRPVTGPGNRPLKSLSHMLKGKQGRFRQNLLGKRVDYSGRSVIVVGPNLKMYQCGLPKEMALELFKPFVMKELVGRGLAHNIKSAKRKIERMSPEIWDVLEEVIREHPVLLNRAPTLHRLGIQAFEPTLVEGRAIRLHPLVCTAYNADFDGDQMAVHVPLSAEAQAEARILMLAAQNILNPKDGKPVVTPSQDMVLGNYYLTLERENAVGEGTIFKDINEAQLAYQNGYVHLHSRIAVFAGSIPNERFTDEQRNQLLITTVGKLIFNTILPKSFPYINEPTKFNLEIETPSKYFVDTTTDVRAHIAAQELIDPFKKKILGNIIAEVFKKFHITETSKMLDRMKDLGFKISTKAGMTVGIADILTLEEKHEILEKAHDTVEKITKSFRRGLITDDERYERVIAVWNAAKDEIQGKLILSLDRLNPIFMMQDSGARGNISNFTQLAGMRGLMADPSGRIVELPITSNFREGLTVLEYFISTHGARKGLTDTALKTADSGYLTRRLVDVAQDVIIREDDCGTDRGLTIKAIREGTEIIEPLEERLEGRYSRKTIRHPETKEVIARENDLITEAIATQIVEAGIEEVTIRSAFTCNTKHGVCKKCYGKNLATGTEVEVGEAVGIIAAQSIGEPGTQLTMRTFHTGGVAGDDITQGLPRIQEIFEARNPKGQAIITEVGGEVVSIEEGRDRQQEITIQGTDDRRSYNIPYTARLRVEEGTIVERGEALTEGSVDPKALIRVRDVLSVQEYLLAEVQKVYRMQGVEIGDKHVEVMVRQMLRKIRVMDTGDTNILPGTLMDIHTFTEANREAILSGSQPATGRPVLLGITKASLETDSFLSAASFQETTRVLTDAAIKGKRDELLGLKENVILGKLVPAGTGIGRYRKLKSEVIKETAEVTDEITNI.

4 residues coordinate Zn(2+): Cys-60, Cys-62, Cys-75, and Cys-78. Mg(2+) contacts are provided by Asp-449, Asp-451, and Asp-453. Zn(2+) contacts are provided by Cys-818, Cys-892, Cys-899, and Cys-902.

The protein belongs to the RNA polymerase beta' chain family. In terms of assembly, the RNAP catalytic core consists of 2 alpha, 1 beta, 1 beta' and 1 omega subunit. When a sigma factor is associated with the core the holoenzyme is formed, which can initiate transcription. Mg(2+) serves as cofactor. Requires Zn(2+) as cofactor.

The catalysed reaction is RNA(n) + a ribonucleoside 5'-triphosphate = RNA(n+1) + diphosphate. Functionally, DNA-dependent RNA polymerase catalyzes the transcription of DNA into RNA using the four ribonucleoside triphosphates as substrates. This is DNA-directed RNA polymerase subunit beta' from Listeria welshimeri serovar 6b (strain ATCC 35897 / DSM 20650 / CCUG 15529 / CIP 8149 / NCTC 11857 / SLCC 5334 / V8).